The primary structure comprises 223 residues: MGLFGKTQEKPPKELVNEWSLKIRKEMRVVDRQIRDIQREEEKVKRSVKDAAKKGQKEVCVVLAKEMIRSRKAVSKLYASKAHMNSVLMGMKNQLAVLRVAGSLQKSTEVMKAMQSLVKIPEIQATMRELSKEMMKAGIIEEMLEDTFESMDDQEEMEEAAEMEIDRILFEITAGALGKAPSKVTDALPEPEPAGAMAASEGDEEDDEEDLEAMQSRLATLRS.

A lipid anchor (N-myristoyl glycine) is attached at G2. Residues 2 to 113 (GLFGKTQEKP…LQKSTEVMKA (112 aa)) form an intramolecular interaction with C-terminus region. Residues 22 to 54 (KIRKEMRVVDRQIRDIQREEEKVKRSVKDAAKK) are a coiled coil. Important for autoinhibitory function stretches follow at residues 59–64 (VCVVLA) and 168–169 (IL). Residues 149 to 223 (ESMDDQEEME…MQSRLATLRS (75 aa)) are a coiled coil. Residues 151–221 (MDDQEEMEEA…EAMQSRLATL (71 aa)) are intramolecular interaction with N-terminus. Residues 151–223 (MDDQEEMEEA…MQSRLATLRS (73 aa)) form an interaction with VPS4A region. K179 participates in a covalent cross-link: Glycyl lysine isopeptide (Lys-Gly) (interchain with G-Cter in ubiquitin). Positions 180–223 (APSKVTDALPEPEPAGAMAASEGDEEDDEEDLEAMQSRLATLRS) are disordered. Interaction with STAMBP stretches follow at residues 196 to 223 (AMAA…TLRS), 204 to 208 (EEDDE), and 222 to 223 (RS). Residue S200 is modified to Phosphoserine. Residues 201–212 (EGDEEDDEEDLE) carry the MIT-interacting motif motif. Residues 201 to 212 (EGDEEDDEEDLE) are compositionally biased toward acidic residues.

It belongs to the SNF7 family. As to quaternary structure, probable core component of the endosomal sorting required for transport complex III (ESCRT-III). ESCRT-III components are thought to multimerize to form a flat lattice on the perimeter membrane of the endosome. Several assembly forms of ESCRT-III may exist that interact and act sequentially. Forms a metastable monomer in solution; its core structure (without part of the putative autoinhibitory C-terminal acidic region) oligomerizes into a flat lattice via two different dimerization interfaces. In vitro, heteromerizes with CHMP2A (but not CHMP4) to form helical tubular structures that expose membrane-interacting sites on the outside whereas VPS4B can associate on the inside of the tubule. May interact with IGFBP7; the relevance of such interaction however remains unclear. Interacts with CHMP2A. Interacts with CHMP4A; the interaction requires the release of CHMP4A autoinhibition. Interacts with VPS4A. Interacts with STAMBP; the interaction appears to relieve the autoinhibition of CHMP3. Interacts with VTA1.

The protein localises to the cytoplasm. It is found in the cytosol. The protein resides in the membrane. Its subcellular location is the endosome. It localises to the late endosome membrane. Probable core component of the endosomal sorting required for transport complex III (ESCRT-III) which is involved in multivesicular bodies (MVBs) formation and sorting of endosomal cargo proteins into MVBs. MVBs contain intraluminal vesicles (ILVs) that are generated by invagination and scission from the limiting membrane of the endosome and mostly are delivered to lysosomes enabling degradation of membrane proteins, such as stimulated growth factor receptors, lysosomal enzymes and lipids. The MVB pathway appears to require the sequential function of ESCRT-O, -I,-II and -III complexes. ESCRT-III proteins mostly dissociate from the invaginating membrane before the ILV is released. The ESCRT machinery also functions in topologically equivalent membrane fission events, such as the terminal stages of cytokinesis. ESCRT-III proteins are believed to mediate the necessary vesicle extrusion and/or membrane fission activities, possibly in conjunction with the AAA ATPase VPS4. Selectively binds to phosphatidylinositol 3,5-bisphosphate PtdIns(3,5)P2 and PtdIns(3,4)P2 in preference to other phosphoinositides tested. Involved in late stages of cytokinesis. Plays a role in endosomal sorting/trafficking of EGF receptor. The sequence is that of Charged multivesicular body protein 3 (Chmp3) from Rattus norvegicus (Rat).